Consider the following 580-residue polypeptide: WD repeat-containing protein 46 (580 aa).

The interval 34-108 is disordered; the sequence is SWKEYKKMKQ…QQEKMKVTKD (75 aa). 2 stretches are compositionally biased toward basic and acidic residues: residues 64 to 85 and 98 to 108; these read TEGR…HDTG and LQQEKMKVTKD. WD repeat units lie at residues 193–234, 235–272, 274–312, 315–354, 357–396, and 399–436; these read AALD…YTYV, YDNL…NSFL, YVDV…HTNG, SLWS…GLDR, RIWD…NHVQ, and RGMH…IGHA.

In terms of assembly, part of the small subunit (SSU) processome.

It localises to the nucleus. Its subcellular location is the nucleolus. In terms of biological role, scaffold component of the nucleolar structure. Part of the small subunit (SSU) processome, first precursor of the small eukaryotic ribosomal subunit. Required for 18S rRNA processing. Plays a role in negative regulation of detoxification genes by inhibiting protein levels of transcription factor skn-1, leading to down-regulation of skn-1 target genes. This Caenorhabditis elegans protein is WD repeat-containing protein 46.